We begin with the raw amino-acid sequence, 362 residues long: MFSSVAHLARANPFNTPHLQLVHDGLGDLRSSSPGPTGQPRRPRNLAAAAVEEQYSCDYGSGRFFILCGLGGIISCGTTHTALVPLDLVKCRMQVDPQKYKGIFNGFSVTLKEDGVRGLAKGWAPTFLGYSMQGLCKFGFYEVFKVLYSNMLGEENTYLWRTSLYLAASASAEFFADIALAPMEAAKVRIQTQPGYANTLRDAAPKMYKEEGLKAFYKGVAPLWMRQIPYTMMKFACFERTVEALYKFVVPKPRSECSKPEQLVVTFVAGYIAGVFCAIVSHPADSVVSVLNKEKGSSASLVLKRLGFKGVWKGLFARIIMIGTLTALQWFIYDSVKVYFRLPRPPPPEMPESLKKKLGLTQ.

The transit peptide at 1 to 49 (MFSSVAHLARANPFNTPHLQLVHDGLGDLRSSSPGPTGQPRRPRNLAAA) directs the protein to the mitochondrion. The Mitochondrial intermembrane portion of the chain corresponds to 50-63 (AVEEQYSCDYGSGR). Solcar repeat units follow at residues 63–147 (RFFI…FKVL), 160–244 (WRTS…TVEA), and 261–339 (EQLV…VKVY). Residues 64–86 (FFILCGLGGIISCGTTHTALVPL) form a helical membrane-spanning segment. Over 87-121 (DLVKCRMQVDPQKYKGIFNGFSVTLKEDGVRGLAK) the chain is Mitochondrial matrix. Residue K99 is modified to N6-acetyllysine. K112 carries the N6-methyllysine modification. The chain crosses the membrane as a helical span at residues 122 to 141 (GWAPTFLGYSMQGLCKFGFY). Residues 142–161 (EVFKVLYSNMLGEENTYLWR) lie on the Mitochondrial intermembrane side of the membrane. Residues 162 to 183 (TSLYLAASASAEFFADIALAPM) traverse the membrane as a helical segment. Residues 184–218 (EAAKVRIQTQPGYANTLRDAAPKMYKEEGLKAFYK) lie on the Mitochondrial matrix side of the membrane. Position 196 is a phosphotyrosine (Y196). K209 carries the post-translational modification N6-acetyllysine. A helical transmembrane segment spans residues 219-238 (GVAPLWMRQIPYTMMKFACF). Over 239–261 (ERTVEALYKFVVPKPRSECSKPE) the chain is Mitochondrial intermembrane. The chain crosses the membrane as a helical span at residues 262–284 (QLVVTFVAGYIAGVFCAIVSHPA). Residues 285–314 (DSVVSVLNKEKGSSASLVLKRLGFKGVWKG) lie on the Mitochondrial matrix side of the membrane. A helical transmembrane segment spans residues 315-333 (LFARIIMIGTLTALQWFIY). Residues 334–362 (DSVKVYFRLPRPPPPEMPESLKKKLGLTQ) lie on the Mitochondrial intermembrane side of the membrane.

The protein belongs to the mitochondrial carrier (TC 2.A.29) family. As to quaternary structure, interacts with PPIF; the interaction is impaired by CsA.

It is found in the mitochondrion inner membrane. The enzyme catalyses phosphate(in) + H(+)(in) = phosphate(out) + H(+)(out). Its function is as follows. Inorganic ion transporter that transports phosphate or copper ions across the mitochondrial inner membrane into the matrix compartment. Mediates proton-coupled symport of phosphate ions necessary for mitochondrial oxidative phosphorylation of ADP to ATP. Transports copper ions probably in the form of anionic copper(I) complexes to maintain mitochondrial matrix copper pool and to supply copper for cytochrome C oxidase complex assembly. May also play a role in regulation of the mitochondrial permeability transition pore (mPTP). The polypeptide is Solute carrier family 25 member 3 (Homo sapiens (Human)).